Here is a 216-residue protein sequence, read N- to C-terminus: Pyrophosphatase PpaX (216 aa).

Asp9 (nucleophile) is an active-site residue.

It belongs to the HAD-like hydrolase superfamily. PpaX family. Requires Mg(2+) as cofactor.

It carries out the reaction diphosphate + H2O = 2 phosphate + H(+). In terms of biological role, hydrolyzes pyrophosphate formed during P-Ser-HPr dephosphorylation by HPrK/P. Might play a role in controlling the intracellular pyrophosphate pool. This is Pyrophosphatase PpaX from Bacillus cereus (strain B4264).